A 97-amino-acid polypeptide reads, in one-letter code: Co-chaperonin GroES (97 aa).

It belongs to the GroES chaperonin family. Heptamer of 7 subunits arranged in a ring. Interacts with the chaperonin GroEL.

It localises to the cytoplasm. In terms of biological role, together with the chaperonin GroEL, plays an essential role in assisting protein folding. The GroEL-GroES system forms a nano-cage that allows encapsulation of the non-native substrate proteins and provides a physical environment optimized to promote and accelerate protein folding. GroES binds to the apical surface of the GroEL ring, thereby capping the opening of the GroEL channel. The chain is Co-chaperonin GroES from Gemmatimonas aurantiaca (strain DSM 14586 / JCM 11422 / NBRC 100505 / T-27).